A 184-amino-acid polypeptide reads, in one-letter code: ATP-dependent protease subunit HslV (184 aa).

T12 is a catalytic residue. Residues A166, C169, and T172 each coordinate Na(+).

The protein belongs to the peptidase T1B family. HslV subfamily. In terms of assembly, a double ring-shaped homohexamer of HslV is capped on each side by a ring-shaped HslU homohexamer. The assembly of the HslU/HslV complex is dependent on binding of ATP.

The protein localises to the cytoplasm. It carries out the reaction ATP-dependent cleavage of peptide bonds with broad specificity.. Its activity is regulated as follows. Allosterically activated by HslU binding. Functionally, protease subunit of a proteasome-like degradation complex believed to be a general protein degrading machinery. In Nitrobacter hamburgensis (strain DSM 10229 / NCIMB 13809 / X14), this protein is ATP-dependent protease subunit HslV.